The sequence spans 229 residues: Large ribosomal subunit protein bL25 (229 aa).

2 disordered regions span residues 1-21 and 187-229; these read MSDA…GASR and PSAL…KGDD. Residues 196–207 show a composition bias toward acidic residues; it reads SEEEEDGEEVDA.

This sequence belongs to the bacterial ribosomal protein bL25 family. CTC subfamily. Part of the 50S ribosomal subunit; part of the 5S rRNA/L5/L18/L25 subcomplex. Contacts the 5S rRNA. Binds to the 5S rRNA independently of L5 and L18.

This is one of the proteins that binds to the 5S RNA in the ribosome where it forms part of the central protuberance. The polypeptide is Large ribosomal subunit protein bL25 (Erythrobacter litoralis (strain HTCC2594)).